The following is a 1153-amino-acid chain: uncharacterized protein (1153 aa).

10 disordered regions span residues 164-193 (TTIK…QIDD), 224-245 (DNYD…DDDK), 294-316 (KSPQ…QSKH), 332-427 (EHKL…KNKK), 613-648 (LSML…EGEN), 683-703 (QQQQ…EEMS), 717-740 (KSDD…SKRK), 772-819 (NKKL…KTIE), 838-874 (ASSG…EDEK), and 942-1106 (NNNN…NNEV). The span at 169-179 (LPPPLPQPQPQ) shows a compositional bias: pro residues. Low complexity-rich tracts occupy residues 231-240 (NNNNNNNNSN), 298-312 (KLKL…QQQK), 336-391 (QQQQ…TPKK), and 399-423 (NNVN…NNNN). Positions 613–625 (LSMLDSTNDGSSQ) are enriched in polar residues. The segment covering 687 to 699 (QEKEKQQQEKQQD) has biased composition (basic and acidic residues). The segment covering 721-734 (NNNNNDNNNNNNNN) has biased composition (low complexity). Residues 772-784 (NKKLRVDSEDQQT) are compositionally biased toward basic and acidic residues. Low complexity-rich tracts occupy residues 788 to 808 (TTTT…NNNN) and 839 to 854 (SSGG…QNDS). Residues 856-874 (TTKEKERSETIKTHNEDEK) are compositionally biased toward basic and acidic residues. A compositionally biased stretch (low complexity) spans 942-987 (NNNNNNNNNINNINNIGNKNTTVNNSNHSNHSNNNINNNNIFKNSN). 2 stretches are compositionally biased toward polar residues: residues 988-998 (PIVDTNFSSTT) and 1005-1015 (QSKIFTGNQLP). The span at 1019–1059 (INNENVVNNNNNNEINNTTTTTTNNNSGIHKNNNNYNSDNS) shows a compositional bias: low complexity. Basic and acidic residues predominate over residues 1064–1081 (DGLKQEKEEQKEEQKENK). Positions 1082-1105 (NNNNNNNNNNNNNNNNNNNNNNNE) are enriched in low complexity.

This is an uncharacterized protein from Dictyostelium discoideum (Social amoeba).